Consider the following 77-residue polypeptide: U8-lycotoxin-Ls1e (77 aa).

Positions 1 to 20 (MKLIIFTGLVLFAIVSLIEA) are cleaved as a signal peptide. Residues 21–26 (QAENEK) constitute a propeptide that is removed on maturation.

The protein belongs to the neurotoxin 19 (CSTX) family. 08 (U8-Lctx) subfamily. Contains 4 disulfide bonds. In terms of tissue distribution, expressed by the venom gland.

The protein resides in the secreted. The polypeptide is U8-lycotoxin-Ls1e (Lycosa singoriensis (Wolf spider)).